Reading from the N-terminus, the 65-residue chain is Metallothionein-like protein 3B (65 aa).

It belongs to the metallothionein superfamily. Type 15 family. As to expression, expressed in leaves and rachis.

Functionally, metallothioneins have a high content of cysteine residues that bind various heavy metals. This Oryza sativa subsp. japonica (Rice) protein is Metallothionein-like protein 3B (MT3B).